The primary structure comprises 99 residues: SAGA-associated factor 11 (99 aa).

The segment at 71–92 (FYCENCGREVSGNRFAAHLQRC) adopts an SGF11-type zinc-finger fold.

Belongs to the SGF11 family. In terms of assembly, component of the 1.8 MDa SAGA transcription coactivator-HAT complex. SAGA is built of 5 distinct domains with specialized functions. Within the SAGA complex, SUS1, SGF11, SGF73 and UBP8 form an additional subcomplex of SAGA called the DUB module (deubiquitination module). Interacts directly with SGF73, SUS1 and UBP8.

It localises to the nucleus. Its function is as follows. Functions as a component of the transcription regulatory histone acetylation (HAT) complex SAGA. At the promoters, SAGA is required for recruitment of the basal transcription machinery. It influences RNA polymerase II transcriptional activity through different activities such as TBP interaction and promoter selectivity, interaction with transcription activators, and chromatin modification through histone acetylation and deubiquitination. SAGA acetylates nucleosomal histone H3 to some extent (to form H3K9ac, H3K14ac, H3K18ac and H3K23ac). SAGA interacts with DNA via upstream activating sequences (UASs). Involved in transcriptional regulation of a subset of SAGA-regulated genes. Within the SAGA complex, participates in a subcomplex, that specifically deubiquitinates histones H2B. The sequence is that of SAGA-associated factor 11 from Candida glabrata (strain ATCC 2001 / BCRC 20586 / JCM 3761 / NBRC 0622 / NRRL Y-65 / CBS 138) (Yeast).